The sequence spans 77 residues: Acyl carrier protein (77 aa).

In terms of domain architecture, Carrier spans 1-76 (MAVFDDVRDV…DVVNYIEKLG (76 aa)). Position 36 is an O-(pantetheine 4'-phosphoryl)serine (S36).

Belongs to the acyl carrier protein (ACP) family. Post-translationally, 4'-phosphopantetheine is transferred from CoA to a specific serine of apo-ACP by AcpS. This modification is essential for activity because fatty acids are bound in thioester linkage to the sulfhydryl of the prosthetic group.

Its subcellular location is the cytoplasm. Its pathway is lipid metabolism; fatty acid biosynthesis. Functionally, carrier of the growing fatty acid chain in fatty acid biosynthesis. In Campylobacter curvus (strain 525.92), this protein is Acyl carrier protein.